We begin with the raw amino-acid sequence, 92 residues long: Large ribosomal subunit protein eL43 (92 aa).

Zn(2+) is bound by residues cysteine 39, cysteine 42, cysteine 57, and cysteine 60. The C4-type zinc-finger motif lies at 39-60; that stretch reads CSFCGKTKMKRRAVGIWHCGSC.

Belongs to the eukaryotic ribosomal protein eL43 family. As to quaternary structure, component of the large ribosomal subunit.

It localises to the cytoplasm. In terms of biological role, component of the large ribosomal subunit. The ribosome is a large ribonucleoprotein complex responsible for the synthesis of proteins in the cell. This Ictalurus punctatus (Channel catfish) protein is Large ribosomal subunit protein eL43 (rpl37a).